The chain runs to 149 residues: Urease accessory protein UreE (149 aa).

It belongs to the UreE family.

The protein resides in the cytoplasm. Its function is as follows. Involved in urease metallocenter assembly. Binds nickel. Probably functions as a nickel donor during metallocenter assembly. This chain is Urease accessory protein UreE, found in Prochlorococcus marinus (strain MIT 9301).